Here is a 236-residue protein sequence, read N- to C-terminus: 5'-methylthioadenosine/S-adenosylhomocysteine nucleosidase (236 aa).

The active-site Proton acceptor is Glu-12. Substrate-binding positions include Gly-78, Ile-153, and 174-175; that span reads ME. The active-site Proton donor is Asp-198.

It belongs to the PNP/UDP phosphorylase family. MtnN subfamily.

The catalysed reaction is S-adenosyl-L-homocysteine + H2O = S-(5-deoxy-D-ribos-5-yl)-L-homocysteine + adenine. It carries out the reaction S-methyl-5'-thioadenosine + H2O = 5-(methylsulfanyl)-D-ribose + adenine. The enzyme catalyses 5'-deoxyadenosine + H2O = 5-deoxy-D-ribose + adenine. It participates in amino-acid biosynthesis; L-methionine biosynthesis via salvage pathway; S-methyl-5-thio-alpha-D-ribose 1-phosphate from S-methyl-5'-thioadenosine (hydrolase route): step 1/2. Its function is as follows. Catalyzes the irreversible cleavage of the glycosidic bond in both 5'-methylthioadenosine (MTA) and S-adenosylhomocysteine (SAH/AdoHcy) to adenine and the corresponding thioribose, 5'-methylthioribose and S-ribosylhomocysteine, respectively. Also cleaves 5'-deoxyadenosine, a toxic by-product of radical S-adenosylmethionine (SAM) enzymes, into 5-deoxyribose and adenine. The polypeptide is 5'-methylthioadenosine/S-adenosylhomocysteine nucleosidase (Shewanella oneidensis (strain ATCC 700550 / JCM 31522 / CIP 106686 / LMG 19005 / NCIMB 14063 / MR-1)).